The chain runs to 906 residues: Valine--tRNA ligase (906 aa).

Positions 43–53 (PNVTGSLHIGH) match the 'HIGH' region motif. Positions 548 to 552 (KMSKS) match the 'KMSKS' region motif. Lys-551 lines the ATP pocket. A coiled-coil region spans residues 842-905 (EKARLTKDIA…EAALSRLASV (64 aa)).

Belongs to the class-I aminoacyl-tRNA synthetase family. ValS type 1 subfamily. Monomer.

The protein localises to the cytoplasm. The enzyme catalyses tRNA(Val) + L-valine + ATP = L-valyl-tRNA(Val) + AMP + diphosphate. In terms of biological role, catalyzes the attachment of valine to tRNA(Val). As ValRS can inadvertently accommodate and process structurally similar amino acids such as threonine, to avoid such errors, it has a 'posttransfer' editing activity that hydrolyzes mischarged Thr-tRNA(Val) in a tRNA-dependent manner. This chain is Valine--tRNA ligase, found in Caulobacter vibrioides (strain ATCC 19089 / CIP 103742 / CB 15) (Caulobacter crescentus).